Consider the following 789-residue polypeptide: Glycerol-3-phosphate acyltransferase (789 aa).

An HXXXXD motif motif is present at residues 275–280; it reads SHRSYI.

This sequence belongs to the GPAT/DAPAT family.

Its subcellular location is the cell membrane. The catalysed reaction is sn-glycerol 3-phosphate + an acyl-CoA = a 1-acyl-sn-glycero-3-phosphate + CoA. It functions in the pathway phospholipid metabolism; CDP-diacylglycerol biosynthesis; CDP-diacylglycerol from sn-glycerol 3-phosphate: step 1/3. The chain is Glycerol-3-phosphate acyltransferase from Mycobacterium tuberculosis (strain ATCC 25177 / H37Ra).